A 276-amino-acid polypeptide reads, in one-letter code: MKGQILREMKVQPAIEPEYEVQRRVAFIKSKLKESYTHTLVLGISGGVDSTLAGRLCQLAVDELNGESQQTDYQFIAVRLPYHIQKDEHEAQLACDFISPSKQVSVNIHDGVLGTHHNTLNGLEAAGVDLAQNVNIDFVKGNVKARMRMIVQYEIAGLTGGLVVGTDHSAENITGFYTKWGDGACDLAPLFGLNKRQVRLLADYLGAPELLVHKAPTADLECDKPQLEDEAALGVTYDQIDDFLEGKPVDSAVNDRLIGIYKATQHKRQPIPTIYD.

43-50 provides a ligand contact to ATP; it reads GISGGVDS. Mg(2+) is bound at residue aspartate 49. Arginine 146 contacts deamido-NAD(+). Threonine 166 serves as a coordination point for ATP. Glutamate 171 provides a ligand contact to Mg(2+). 2 residues coordinate deamido-NAD(+): lysine 179 and aspartate 186. Lysine 195 and threonine 217 together coordinate ATP. Deamido-NAD(+) is bound at residue 266 to 267; sequence HK.

The protein belongs to the NAD synthetase family. In terms of assembly, homodimer.

It catalyses the reaction deamido-NAD(+) + NH4(+) + ATP = AMP + diphosphate + NAD(+) + H(+). It participates in cofactor biosynthesis; NAD(+) biosynthesis; NAD(+) from deamido-NAD(+) (ammonia route): step 1/1. Functionally, catalyzes the ATP-dependent amidation of deamido-NAD to form NAD. Uses ammonia as a nitrogen source. This Shewanella sediminis (strain HAW-EB3) protein is NH(3)-dependent NAD(+) synthetase.